We begin with the raw amino-acid sequence, 120 residues long: Ribosome-binding factor A (120 aa).

Belongs to the RbfA family. As to quaternary structure, monomer. Binds 30S ribosomal subunits, but not 50S ribosomal subunits or 70S ribosomes.

The protein localises to the cytoplasm. Functionally, one of several proteins that assist in the late maturation steps of the functional core of the 30S ribosomal subunit. Associates with free 30S ribosomal subunits (but not with 30S subunits that are part of 70S ribosomes or polysomes). Required for efficient processing of 16S rRNA. May interact with the 5'-terminal helix region of 16S rRNA. The polypeptide is Ribosome-binding factor A (Chlorobaculum parvum (strain DSM 263 / NCIMB 8327) (Chlorobium vibrioforme subsp. thiosulfatophilum)).